A 345-amino-acid polypeptide reads, in one-letter code: Opioid-binding protein/cell adhesion molecule (345 aa).

Residues 1–27 (MGVCGYLFLPWKCLVVVSLRLLFLVPT) form the signal peptide. Ig-like C2-type domains follow at residues 39–126 (PKAM…PKTS), 136–219 (PQIM…VKIT), and 223–310 (PPYI…ASIT). N-linked (GlcNAc...) asparagine glycosylation is found at Asn-44, Asn-70, and Asn-140. Cys-57 and Cys-115 form a disulfide bridge. Intrachain disulfides connect Cys-157-Cys-202 and Cys-244-Cys-296. N-linked (GlcNAc...) asparagine glycans are attached at residues Asn-285, Asn-293, and Asn-306. Asn-322 carries GPI-anchor amidated asparagine lipidation. A propeptide spans 323–345 (SASRALACLWLSGTFFAHFFIKF) (removed in mature form).

It belongs to the immunoglobulin superfamily. IgLON family.

It is found in the cell membrane. Functionally, binds opioids in the presence of acidic lipids; probably involved in cell contact. This Rattus norvegicus (Rat) protein is Opioid-binding protein/cell adhesion molecule (Opcml).